Reading from the N-terminus, the 223-residue chain is Small ribosomal subunit protein uS3 (223 aa).

In terms of domain architecture, KH type-2 spans 39–108 (IRNFVKKNSY…NILINIVEVK (70 aa)).

This sequence belongs to the universal ribosomal protein uS3 family. In terms of assembly, part of the 30S ribosomal subunit. Forms a tight complex with proteins S10 and S14.

Binds the lower part of the 30S subunit head. Binds mRNA in the 70S ribosome, positioning it for translation. The sequence is that of Small ribosomal subunit protein uS3 from Clostridium botulinum (strain Kyoto / Type A2).